The chain runs to 254 residues: Phytolongin Phyl1.1 (254 aa).

A Longin domain is found at 12 to 113 (CVSRDNQILY…TAMIGSINVE (102 aa)). Positions 138–173 (ELKSSNLGEQSEGSNSTKAPLLGRLSKQEKKKGKDH) are disordered. Polar residues predominate over residues 145 to 155 (GEQSEGSNSTK). Residues 226–246 (IVLAIDAAICLTLFGIWLAIC) traverse the membrane as a helical; Anchor for type IV membrane protein segment.

It belongs to the synaptobrevin family.

Its subcellular location is the membrane. Non-SNARE longin protein involved in membrane-trafficking machinery. The sequence is that of Phytolongin Phyl1.1 from Arabidopsis thaliana (Mouse-ear cress).